The following is a 430-amino-acid chain: Adenylosuccinate synthetase (430 aa).

GTP-binding positions include 12 to 18 and 40 to 42; these read GDEGKGK and GHT. Residue aspartate 13 is the Proton acceptor of the active site. Residues aspartate 13 and glycine 40 each coordinate Mg(2+). IMP is bound by residues 13–16, 38–41, threonine 130, arginine 144, glutamine 224, threonine 239, and arginine 303; these read DEGK and NAGH. The active-site Proton donor is histidine 41. Residue 299 to 305 coordinates substrate; sequence ATTGRPR. GTP is bound by residues arginine 305, 331–333, and 413–415; these read KLD and SVG.

This sequence belongs to the adenylosuccinate synthetase family. Homodimer. Requires Mg(2+) as cofactor.

The protein resides in the cytoplasm. The catalysed reaction is IMP + L-aspartate + GTP = N(6)-(1,2-dicarboxyethyl)-AMP + GDP + phosphate + 2 H(+). It participates in purine metabolism; AMP biosynthesis via de novo pathway; AMP from IMP: step 1/2. Functionally, plays an important role in the de novo pathway of purine nucleotide biosynthesis. Catalyzes the first committed step in the biosynthesis of AMP from IMP. The protein is Adenylosuccinate synthetase of Trichlorobacter lovleyi (strain ATCC BAA-1151 / DSM 17278 / SZ) (Geobacter lovleyi).